The chain runs to 403 residues: Phosphopentomutase (403 aa).

Residues aspartate 13, aspartate 298, histidine 303, aspartate 339, histidine 340, and histidine 351 each contribute to the Mn(2+) site.

This sequence belongs to the phosphopentomutase family. Mn(2+) serves as cofactor.

The protein localises to the cytoplasm. The catalysed reaction is 2-deoxy-alpha-D-ribose 1-phosphate = 2-deoxy-D-ribose 5-phosphate. It carries out the reaction alpha-D-ribose 1-phosphate = D-ribose 5-phosphate. It participates in carbohydrate degradation; 2-deoxy-D-ribose 1-phosphate degradation; D-glyceraldehyde 3-phosphate and acetaldehyde from 2-deoxy-alpha-D-ribose 1-phosphate: step 1/2. In terms of biological role, isomerase that catalyzes the conversion of deoxy-ribose 1-phosphate (dRib-1-P) and ribose 1-phosphate (Rib-1-P) to deoxy-ribose 5-phosphate (dRib-5-P) and ribose 5-phosphate (Rib-5-P), respectively. This is Phosphopentomutase from Streptococcus mutans serotype c (strain ATCC 700610 / UA159).